Reading from the N-terminus, the 60-residue chain is MRCLPVFVILLLLIASTPSVNARPKTKDLASFHDNAKRTQHIFWSKRNCCIYENWCCEWI.

A signal peptide spans 1-22; that stretch reads MRCLPVFVILLLLIASTPSVNA. The propeptide occupies 23-45; it reads RPKTKDLASFHDNAKRTQHIFWS.

Belongs to the conotoxin T superfamily. Post-translationally, contains 2 disulfide bonds that can be either 'C1-C3, C2-C4' or 'C1-C4, C2-C3', since these disulfide connectivities have been observed for conotoxins with cysteine framework V (for examples, see AC P0DQQ7 and AC P81755). In terms of tissue distribution, expressed by the venom duct.

The protein localises to the secreted. The protein is Conotoxin PnMRCL-022 of Conus pennaceus (Feathered cone).